A 139-amino-acid chain; its full sequence is Ribulose bisphosphate carboxylase small subunit (139 aa).

The protein belongs to the RuBisCO small chain family. As to quaternary structure, heterohexadecamer of 8 large and 8 small subunits.

It is found in the plastid. Its subcellular location is the chloroplast. Its function is as follows. RuBisCO catalyzes two reactions: the carboxylation of D-ribulose 1,5-bisphosphate, the primary event in carbon dioxide fixation, as well as the oxidative fragmentation of the pentose substrate in the photorespiration process. Both reactions occur simultaneously and in competition at the same active site. Although the small subunit is not catalytic it is essential for maximal activity. In Chrysotila carterae (Marine alga), this protein is Ribulose bisphosphate carboxylase small subunit.